The following is a 425-amino-acid chain: Serine--tRNA ligase (425 aa).

228–230 serves as a coordination point for L-serine; sequence TAE. 259–261 lines the ATP pocket; it reads RSE. E282 contributes to the L-serine binding site. 346–349 provides a ligand contact to ATP; it reads EIAS. S382 provides a ligand contact to L-serine.

This sequence belongs to the class-II aminoacyl-tRNA synthetase family. Type-1 seryl-tRNA synthetase subfamily. In terms of assembly, homodimer. The tRNA molecule binds across the dimer.

It is found in the cytoplasm. The catalysed reaction is tRNA(Ser) + L-serine + ATP = L-seryl-tRNA(Ser) + AMP + diphosphate + H(+). It catalyses the reaction tRNA(Sec) + L-serine + ATP = L-seryl-tRNA(Sec) + AMP + diphosphate + H(+). Its pathway is aminoacyl-tRNA biosynthesis; selenocysteinyl-tRNA(Sec) biosynthesis; L-seryl-tRNA(Sec) from L-serine and tRNA(Sec): step 1/1. In terms of biological role, catalyzes the attachment of serine to tRNA(Ser). Is also able to aminoacylate tRNA(Sec) with serine, to form the misacylated tRNA L-seryl-tRNA(Sec), which will be further converted into selenocysteinyl-tRNA(Sec). This Rickettsia prowazekii (strain Madrid E) protein is Serine--tRNA ligase.